Consider the following 279-residue polypeptide: Lacto-N-neotetraose biosynthesis glycosyltransferase LgtB (279 aa).

Belongs to the glycosyltransferase 25 family.

It participates in glycan metabolism; lacto-N-neotetraose biosynthesis. It functions in the pathway bacterial outer membrane biogenesis; lipooligosaccharide biosynthesis. Adds the second galactose to the lacto-N-tetraose chain in lipooligosaccharide (LOS). This is Lacto-N-neotetraose biosynthesis glycosyltransferase LgtB (lgtB) from Neisseria gonorrhoeae.